Consider the following 496-residue polypeptide: L-arabinose isomerase (496 aa).

Positions 302, 329, 346, and 445 each coordinate Mn(2+).

Belongs to the arabinose isomerase family. It depends on Mn(2+) as a cofactor.

It catalyses the reaction beta-L-arabinopyranose = L-ribulose. Its pathway is carbohydrate degradation; L-arabinose degradation via L-ribulose; D-xylulose 5-phosphate from L-arabinose (bacterial route): step 1/3. Its function is as follows. Catalyzes the conversion of L-arabinose to L-ribulose. The protein is L-arabinose isomerase of Thermotoga petrophila (strain ATCC BAA-488 / DSM 13995 / JCM 10881 / RKU-1).